Reading from the N-terminus, the 119-residue chain is Large ribosomal subunit protein bL20 (119 aa).

The protein belongs to the bacterial ribosomal protein bL20 family.

Its function is as follows. Binds directly to 23S ribosomal RNA and is necessary for the in vitro assembly process of the 50S ribosomal subunit. It is not involved in the protein synthesizing functions of that subunit. In Enterococcus faecalis (strain ATCC 700802 / V583), this protein is Large ribosomal subunit protein bL20.